The primary structure comprises 113 residues: uncharacterized protein (113 aa).

2 helical membrane-spanning segments follow: residues 25–45 (FGFCYFLFLISFIMCIVCFII) and 49–69 (FEVEIILVILFPFLLLILSVW).

Its subcellular location is the host membrane. This is an uncharacterized protein from Spiroplasma citri (SpV1).